Reading from the N-terminus, the 136-residue chain is Congerin-2 (136 aa).

Ser-2 is modified (N-acetylserine). The 133-residue stretch at 4 to 136 folds into the Galectin domain; sequence RAEVRNIPFK…DARLTFVRLE (133 aa). A beta-D-galactoside is bound at residue 70 to 76; the sequence is WQQEERS.

As to quaternary structure, homodimer.

In terms of biological role, this protein binds beta-galactoside. Its physiological function is not yet known. This Conger myriaster (Conger eel) protein is Congerin-2.